The following is a 491-amino-acid chain: UDP-N-acetylmuramate--L-alanine ligase (491 aa).

Position 126–132 (G126–T132) interacts with ATP.

The protein belongs to the MurCDEF family.

Its subcellular location is the cytoplasm. The enzyme catalyses UDP-N-acetyl-alpha-D-muramate + L-alanine + ATP = UDP-N-acetyl-alpha-D-muramoyl-L-alanine + ADP + phosphate + H(+). Its pathway is cell wall biogenesis; peptidoglycan biosynthesis. Functionally, cell wall formation. The chain is UDP-N-acetylmuramate--L-alanine ligase from Shigella dysenteriae serotype 1 (strain Sd197).